We begin with the raw amino-acid sequence, 44 residues long: MSYYGNYYGGLGYGYDCKYSYTSGFGAFRILDCGYRCGCGGVWI.

Belongs to the KRTAP type 20 family. In terms of assembly, interacts with hair keratins.

Its function is as follows. In the hair cortex, hair keratin intermediate filaments are embedded in an interfilamentous matrix, consisting of hair keratin-associated proteins (KRTAP), which are essential for the formation of a rigid and resistant hair shaft through their extensive disulfide bond cross-linking with abundant cysteine residues of hair keratins. The matrix proteins include the high-sulfur and high-glycine-tyrosine keratins. This chain is Keratin-associated protein 20-3 (KRTAP20-3), found in Homo sapiens (Human).